The following is an 88-amino-acid chain: Small ribosomal subunit protein bS20 (88 aa).

It belongs to the bacterial ribosomal protein bS20 family.

Binds directly to 16S ribosomal RNA. The polypeptide is Small ribosomal subunit protein bS20 (Rhodopseudomonas palustris (strain BisA53)).